We begin with the raw amino-acid sequence, 244 residues long: rRNA adenine N-6-methyltransferase (244 aa).

S-adenosyl-L-methionine is bound by residues Asn-11, Ile-13, Gly-38, Glu-59, Asp-84, and Asn-101.

Belongs to the class I-like SAM-binding methyltransferase superfamily. rRNA adenine N(6)-methyltransferase family.

It catalyses the reaction adenosine(2085) in 23S rRNA + 2 S-adenosyl-L-methionine = N(6)-dimethyladenosine(2085) in 23S rRNA + 2 S-adenosyl-L-homocysteine + 2 H(+). In terms of biological role, this protein produces a dimethylation of the adenine residue at position 2085 in 23S rRNA, resulting in reduced affinity between ribosomes and macrolide-lincosamide-streptogramin B antibiotics. This chain is rRNA adenine N-6-methyltransferase (ermM), found in Staphylococcus epidermidis.